We begin with the raw amino-acid sequence, 179 residues long: Cell division protein SepF (179 aa).

Residues 22–53 form a disordered region; that stretch reads LPYEKRDEPVFTPVNSSQEPALPMNQPSQSVG. Over residues 34–53 the composition is skewed to polar residues; it reads PVNSSQEPALPMNQPSQSVG.

Belongs to the SepF family. As to quaternary structure, homodimer. Interacts with FtsZ.

The protein localises to the cytoplasm. In terms of biological role, cell division protein that is part of the divisome complex and is recruited early to the Z-ring. Probably stimulates Z-ring formation, perhaps through the cross-linking of FtsZ protofilaments. Its function overlaps with FtsA. In Streptococcus pneumoniae (strain P1031), this protein is Cell division protein SepF.